The following is a 432-amino-acid chain: 23S rRNA (uracil(1939)-C(5))-methyltransferase RlmD (432 aa).

A TRAM domain is found at 1–53 (MPIGKIESLDHEARGITRQEGKAIFVDGALPGETVEYASFRRKSKFELAHLVH). [4Fe-4S] cluster is bound by residues Cys-66, Cys-72, Cys-75, and Cys-154. Positions 263, 292, 297, 313, 341, and 362 each coordinate S-adenosyl-L-methionine. The active-site Nucleophile is Cys-388.

The protein belongs to the class I-like SAM-binding methyltransferase superfamily. RNA M5U methyltransferase family. RlmD subfamily.

It catalyses the reaction uridine(1939) in 23S rRNA + S-adenosyl-L-methionine = 5-methyluridine(1939) in 23S rRNA + S-adenosyl-L-homocysteine + H(+). Functionally, catalyzes the formation of 5-methyl-uridine at position 1939 (m5U1939) in 23S rRNA. The protein is 23S rRNA (uracil(1939)-C(5))-methyltransferase RlmD of Dechloromonas aromatica (strain RCB).